The following is a 401-amino-acid chain: CCA-adding enzyme (401 aa).

The ATP site is built by G32 and R35. G32 and R35 together coordinate CTP. Mg(2+) is bound by residues D45 and D47. ATP-binding residues include R116, D159, R162, R165, and R168. The CTP site is built by R116, D159, R162, R165, and R168.

The protein belongs to the tRNA nucleotidyltransferase/poly(A) polymerase family. Bacterial CCA-adding enzyme type 3 subfamily. Homodimer. Mg(2+) is required as a cofactor.

It carries out the reaction a tRNA precursor + 2 CTP + ATP = a tRNA with a 3' CCA end + 3 diphosphate. The enzyme catalyses a tRNA with a 3' CCA end + 2 CTP + ATP = a tRNA with a 3' CCACCA end + 3 diphosphate. Catalyzes the addition and repair of the essential 3'-terminal CCA sequence in tRNAs without using a nucleic acid template. Adds these three nucleotides in the order of C, C, and A to the tRNA nucleotide-73, using CTP and ATP as substrates and producing inorganic pyrophosphate. tRNA 3'-terminal CCA addition is required both for tRNA processing and repair. Also involved in tRNA surveillance by mediating tandem CCA addition to generate a CCACCA at the 3' terminus of unstable tRNAs. While stable tRNAs receive only 3'-terminal CCA, unstable tRNAs are marked with CCACCA and rapidly degraded. The chain is CCA-adding enzyme from Streptococcus mutans serotype c (strain ATCC 700610 / UA159).